The chain runs to 397 residues: DNA-directed RNA polymerase subunit Rpo1C (397 aa).

This sequence belongs to the RNA polymerase beta' chain family. In terms of assembly, part of the RNA polymerase complex.

It localises to the cytoplasm. It carries out the reaction RNA(n) + a ribonucleoside 5'-triphosphate = RNA(n+1) + diphosphate. Functionally, DNA-dependent RNA polymerase (RNAP) catalyzes the transcription of DNA into RNA using the four ribonucleoside triphosphates as substrates. Forms part of the jaw domain. The protein is DNA-directed RNA polymerase subunit Rpo1C of Methanococcus aeolicus (strain ATCC BAA-1280 / DSM 17508 / OCM 812 / Nankai-3).